We begin with the raw amino-acid sequence, 119 residues long: Neuropeptide B (119 aa).

The first 21 residues, methionine 1–alanine 21, serve as a signal peptide directing secretion. A propeptide spanning residues serine 53–alanine 119 is cleaved from the precursor.

This sequence belongs to the neuropeptide B/W family. Detected in a variety of tissues. High levels are found in the lymphoid organs, central nervous system, mammary gland and uterus.

It localises to the secreted. Its function is as follows. May be involved in the regulation of feeding, neuroendocrine system, memory and learning. May be involved in the afferent pain pathway. In Rattus norvegicus (Rat), this protein is Neuropeptide B (Npb).